Reading from the N-terminus, the 102-residue chain is Small ribosomal subunit protein uS10 (102 aa).

Belongs to the universal ribosomal protein uS10 family. As to quaternary structure, part of the 30S ribosomal subunit.

Functionally, involved in the binding of tRNA to the ribosomes. This Oceanobacillus iheyensis (strain DSM 14371 / CIP 107618 / JCM 11309 / KCTC 3954 / HTE831) protein is Small ribosomal subunit protein uS10.